Here is a 665-residue protein sequence, read N- to C-terminus: tRNA 5-methylaminomethyl-2-thiouridine biosynthesis bifunctional protein MnmC (665 aa).

Residues 1-235 form a tRNA (mnm(5)s(2)U34)-methyltransferase region; sequence MTITRHAQID…KWEVLRGTFI (235 aa). The interval 266 to 665 is FAD-dependent cmnm(5)s(2)U34 oxidoreductase; it reads IGAGLAGCAT…RGKGKQTVGH (400 aa).

This sequence in the N-terminal section; belongs to the methyltransferase superfamily. tRNA (mnm(5)s(2)U34)-methyltransferase family. It in the C-terminal section; belongs to the DAO family. FAD is required as a cofactor.

Its subcellular location is the cytoplasm. It carries out the reaction 5-aminomethyl-2-thiouridine(34) in tRNA + S-adenosyl-L-methionine = 5-methylaminomethyl-2-thiouridine(34) in tRNA + S-adenosyl-L-homocysteine + H(+). Functionally, catalyzes the last two steps in the biosynthesis of 5-methylaminomethyl-2-thiouridine (mnm(5)s(2)U) at the wobble position (U34) in tRNA. Catalyzes the FAD-dependent demodification of cmnm(5)s(2)U34 to nm(5)s(2)U34, followed by the transfer of a methyl group from S-adenosyl-L-methionine to nm(5)s(2)U34, to form mnm(5)s(2)U34. The protein is tRNA 5-methylaminomethyl-2-thiouridine biosynthesis bifunctional protein MnmC of Pseudomonas syringae pv. syringae (strain B728a).